The primary structure comprises 170 residues: Viral interleukin-10 homolog (170 aa).

A signal peptide spans 1–23 (MERRLVVTLQCLVLLYLAPECGG). 2 cysteine pairs are disulfide-bonded: Cys-27–Cys-119 and Cys-73–Cys-125. Residues 97-145 (EAKDHVNSLGENLKTLRLRLRRCHRFLPCENKSKAVEQIKNAFNKLQEK) adopt a coiled-coil conformation. Residue Asn-127 is glycosylated (N-linked (GlcNAc...) asparagine; by host).

This sequence belongs to the IL-10 family. As to quaternary structure, homodimer.

It localises to the secreted. Functionally, inhibits IFN-gamma synthesis. Down-regulates the expression of the host TAP1 gene (transporter associated with antigen processing), thereby affecting the transport of peptides into the endoplasmic reticulum and subsequent peptide loading by MHC class I molecules. In consequence, infected cells are masked for immune recognition by cytotoxic T-lymphocytes. The protein is Viral interleukin-10 homolog of Epstein-Barr virus (strain AG876) (HHV-4).